The following is a 161-amino-acid chain: Phenolic acid decarboxylase PadC (161 aa).

2 residues coordinate substrate: Y11 and Y13. The active-site Proton donor is the Y19. Substrate is bound at residue R41. The active-site Proton acceptor is E64.

This sequence belongs to the PadC family. As to quaternary structure, homodimer.

The catalysed reaction is (E)-4-coumarate + H(+) = 4-vinylphenol + CO2. The enzyme catalyses (E)-cinnamate + H(+) = styrene + CO2. It catalyses the reaction (E)-ferulate + H(+) = 2-methoxy-4-vinylphenol + CO2. Its function is as follows. Involved in the decarboxylation and detoxification of phenolic derivatives. It is able to catalyze the decarboxylation of ferulic, p-coumaric and caffeic acids. The polypeptide is Phenolic acid decarboxylase PadC (padC) (Bacillus subtilis (strain 168)).